Here is a 187-residue protein sequence, read N- to C-terminus: GTPase KRas (187 aa).

Residues 10–18 (GAVGVGKSA), 29–35 (VDEYDPT), 59–60 (AG), and 116–119 (NKCA) each bind GTP. The Effector region signature appears at 32–40 (YDPTIEDSY). A disordered region spans residues 168–187 (EKMSKDGKKKKKSKTKCSIL). At cysteine 184 the chain carries Cysteine methyl ester. Residue cysteine 184 is the site of S-farnesyl cysteine attachment. Positions 185-187 (SIL) are cleaved as a propeptide — removed in mature form.

It belongs to the small GTPase superfamily. Ras family.

The protein resides in the cell membrane. It is found in the cytoplasm. It carries out the reaction GTP + H2O = GDP + phosphate + H(+). Its activity is regulated as follows. Alternates between an inactive form bound to GDP and an active form bound to GTP. Activated by a guanine nucleotide-exchange factor (GEF) and inactivated by a GTPase-activating protein (GAP). In terms of biological role, ras proteins bind GDP/GTP and possess intrinsic GTPase activity. Plays an important role in the regulation of cell proliferation. This chain is GTPase KRas (kras), found in Xenopus laevis (African clawed frog).